The following is a 907-amino-acid chain: Dual serine/threonine and tyrosine protein kinase (907 aa).

Positions 373–409 (RKKENELYESLMNIANRKQEEMKDMIVETLNTMKEEL) form a coiled coil. One can recognise a Protein kinase domain in the interval 630–884 (PKLGQELGRG…PLLGIVQPML (255 aa)). ATP is bound by residues 636 to 644 (LGRGQYGVV) and Lys-659. The Proton acceptor role is filled by Asp-755.

Belongs to the protein kinase superfamily. Ser/Thr protein kinase family.

It localises to the cytoplasm. It is found in the cell membrane. The protein resides in the apical cell membrane. Its subcellular location is the basolateral cell membrane. The protein localises to the cell junction. It carries out the reaction L-seryl-[protein] + ATP = O-phospho-L-seryl-[protein] + ADP + H(+). It catalyses the reaction L-threonyl-[protein] + ATP = O-phospho-L-threonyl-[protein] + ADP + H(+). The catalysed reaction is L-tyrosyl-[protein] + ATP = O-phospho-L-tyrosyl-[protein] + ADP + H(+). In terms of biological role, acts as a positive regulator of ERK phosphorylation downstream of fibroblast growth factor-receptor activation. Involved in the regulation of both caspase-dependent apoptosis and caspase-independent cell death. In the skin, it plays a predominant role in suppressing caspase-dependent apoptosis in response to UV stress in a range of dermal cell types. The chain is Dual serine/threonine and tyrosine protein kinase from Macaca mulatta (Rhesus macaque).